The chain runs to 451 residues: AP-3 complex subunit mu (451 aa).

Positions 191 to 450 (NNEIYVDLVE…TSRAGDYIVR (260 aa)) constitute an MHD domain.

This sequence belongs to the adaptor complexes medium subunit family. Adaptor protein complex 3 (AP-3) is a heterotetramer composed of 2 large adaptins (APL5 and APL6), a medium adaptin (APM3) and a small adaptin (APS3).

The protein localises to the golgi apparatus. Its subcellular location is the cytoplasmic vesicle membrane. Functionally, part of the AP-3 complex, an adaptor-related complex which is not clathrin-associated. The complex is associated with the Golgi region as well as more peripheral structures. It facilitates the budding of vesicles from the Golgi membrane and may be directly involved in trafficking to the vacuole. The chain is AP-3 complex subunit mu (APM3) from Eremothecium gossypii (strain ATCC 10895 / CBS 109.51 / FGSC 9923 / NRRL Y-1056) (Yeast).